The sequence spans 50 residues: Photosystem II reaction center protein M (50 aa).

The chain crosses the membrane as a helical span at residues 7–27 (GFVASLLFVGVPTIFLIGLFI).

Belongs to the PsbM family. In terms of assembly, PSII is composed of 1 copy each of membrane proteins PsbA, PsbB, PsbC, PsbD, PsbE, PsbF, PsbH, PsbI, PsbJ, PsbK, PsbL, PsbM, PsbT, PsbX, PsbY, Psb30/Ycf12, peripheral proteins PsbO, CyanoQ (PsbQ), PsbU, PsbV and a large number of cofactors. It forms dimeric complexes.

Its subcellular location is the cellular thylakoid membrane. One of the components of the core complex of photosystem II (PSII). PSII is a light-driven water:plastoquinone oxidoreductase that uses light energy to abstract electrons from H(2)O, generating O(2) and a proton gradient subsequently used for ATP formation. It consists of a core antenna complex that captures photons, and an electron transfer chain that converts photonic excitation into a charge separation. This subunit is found at the monomer-monomer interface. This is Photosystem II reaction center protein M from Prochlorococcus marinus (strain MIT 9515).